Reading from the N-terminus, the 619-residue chain is Secretogranin-2 (619 aa).

An N-terminal signal peptide occupies residues 1 to 30 (MTESKAYRFGAVLLLIHLIFLVPGTEAASF). The residue at position 153 (Tyr-153) is a Sulfotyrosine. Ser-176 and Ser-270 each carry phosphoserine. The disordered stretch occupies residues 247-307 (VGGEDWSPME…RKESKDQLSE (61 aa)). Composition is skewed to basic and acidic residues over residues 255–286 (MEEK…EMKR) and 295–307 (EGNR…QLSE). 4 positions are modified to phosphoserine: Ser-434, Ser-534, Ser-557, and Ser-558.

Belongs to the chromogranin/secretogranin protein family. In terms of assembly, interacts with Secretogranin III/SCG3. As to expression, brain. Expression in the pituitary is restricted to the anterior lobe. Expression in the hypothalamus is observed in the neuronal cells and neurons of arcuate nucleus, supraoptic nucleus and median eminence (at protein level).

Its subcellular location is the secreted. Neuroendocrine protein of the granin family that regulates the biogenesis of secretory granules. The chain is Secretogranin-2 (Scg2) from Rattus norvegicus (Rat).